Here is a 385-residue protein sequence, read N- to C-terminus: Elsinochromes biosynthesis cluster protein HP2 (385 aa).

The first 22 residues, 1 to 22 (MVLLYILIMVALIPMYMTVVQD), serve as a signal peptide directing secretion. Helical transmembrane passes span 94-114 (TVLS…SMFD) and 148-168 (FYGQ…IVLW). An N-linked (GlcNAc...) asparagine glycan is attached at Asn-187. The chain crosses the membrane as a helical span at residues 209 to 229 (SWTFGQIVPIVLLVSPLVAAF). N-linked (GlcNAc...) asparagine glycosylation is present at Asn-248. The next 2 helical transmembrane spans lie at 309–329 (AILF…LPLA) and 344–364 (YYAF…AVPF).

It is found in the membrane. Part of the gene cluster that mediates the biosynthesis of elsinochromes, pigments consisting of at least four interconvertible tautomers (A, B, C and D) that have a core phenolic quinone to which various side chains are attached and which play an important role in fungal pathogenesis. The non-reducing polyketide synthase PKS1 was proposed to iteratively catalyze decarboxylation between acetyl-CoA and malonyl-CoA subunits for polyketide chain elongation. The released polyketide undergoes cyclization to form an aromatic ring, and proceeds via serial modification steps to produce the heptaketide back- bone of elsinochrome. As elsinochrome has a symmetrical structure, two identical heptaketides are fused to form a core 1,2-dihydrobenzo-perylene ring structure, which can then be successively modified to produce the various derivatives of elsinochrome. Some of these reactions may be cooperatively carried out, at least in part, by the products of RDT1, OXR1 and PKS1. PRF1, embedded within the elsinochrome cluster possibly functions to stabilize some of the biosynthetic enzymes required for elsinochrome production. As prefoldin is a hexamer containing 2 a and 4 b subunits, additional prefoldin subunits, whose coding genes may not immediately link to the elsinochrome biosynthetic gene cluster, are required to fulfill the chaperone function. In addition, no methyltransferase-coding gene exists within the biosynthetic gene cluster, even though elsinochrome has four methyl groups at positions C3, C7, C8 and C12. Apparently, the identified gene cluster does not contain the entire entourage of genes responsible for elsinochrome biosynthesis. Once elsinochrome is synthesized, it must be exported outside the fungal cells, which is probably accomplished by the ECT1 transporter, to avoid toxicity. This Elsinoe fawcettii (Citrus scab fungus) protein is Elsinochromes biosynthesis cluster protein HP2.